A 31-amino-acid polypeptide reads, in one-letter code: Dermaseptin-7.1TR (31 aa).

Position 31 is a glutamine amide (Gln31).

In terms of tissue distribution, expressed by the skin glands.

It is found in the secreted. In terms of biological role, has antimicrobial activity. This chain is Dermaseptin-7.1TR, found in Phyllomedusa trinitatis (Trinidad leaf frog).